Here is a 325-residue protein sequence, read N- to C-terminus: Formimidoylglutamase (325 aa).

The Mn(2+) site is built by histidine 130, aspartate 156, histidine 158, aspartate 160, cysteine 244, and aspartate 246.

The protein belongs to the arginase family. It depends on Mn(2+) as a cofactor.

It catalyses the reaction N-formimidoyl-L-glutamate + H2O = formamide + L-glutamate. Its pathway is amino-acid degradation; L-histidine degradation into L-glutamate; L-glutamate from N-formimidoyl-L-glutamate (hydrolase route): step 1/1. Functionally, catalyzes the conversion of N-formimidoyl-L-glutamate to L-glutamate and formamide. This is Formimidoylglutamase from Geobacillus sp. (strain WCH70).